Reading from the N-terminus, the 159-residue chain is Ribosomal RNA large subunit methyltransferase H (159 aa).

Residues Leu76, Gly108, and 127-132 (FSKMTF) contribute to the S-adenosyl-L-methionine site.

It belongs to the RNA methyltransferase RlmH family. Homodimer.

The protein localises to the cytoplasm. The enzyme catalyses pseudouridine(1915) in 23S rRNA + S-adenosyl-L-methionine = N(3)-methylpseudouridine(1915) in 23S rRNA + S-adenosyl-L-homocysteine + H(+). Specifically methylates the pseudouridine at position 1915 (m3Psi1915) in 23S rRNA. This Geobacillus thermodenitrificans (strain NG80-2) protein is Ribosomal RNA large subunit methyltransferase H.